The following is a 113-amino-acid chain: Class I hydrophobin POH3 (113 aa).

Residues 1–21 form the signal peptide; that stretch reads MFSRVIFCTFLILPLLAAATA. Intrachain disulfides connect cysteine 32-cysteine 92, cysteine 39-cysteine 86, cysteine 40-cysteine 73, and cysteine 93-cysteine 106. N-linked (GlcNAc...) asparagine glycosylation occurs at asparagine 110.

This sequence belongs to the fungal hydrophobin family. In terms of assembly, self-assembles to form functional amyloid fibrils called rodlets. Self-assembly into fibrillar rodlets occurs spontaneously at hydrophobic:hydrophilic interfaces and the rodlets further associate laterally to form amphipathic monolayers. In terms of tissue distribution, expressionn is switched off in the fruiting bodies but abundantly expressed in the vegetative mycelium of both monokaryon and dikaryon.

Its subcellular location is the secreted. The protein resides in the cell wall. Aerial growth, conidiation, and dispersal of filamentous fungi in the environment rely upon a capability of their secreting small amphipathic proteins called hydrophobins (HPBs) with low sequence identity. Class I can self-assemble into an outermost layer of rodlet bundles on aerial cell surfaces, conferring cellular hydrophobicity that supports fungal growth, development and dispersal; whereas Class II form highly ordered films at water-air interfaces through intermolecular interactions but contribute nothing to the rodlet structure. POH3 is a class I hydrophobin that causes a large drop in the water-surface tension, enabling hyphae to breach the interface and grow into the air, in both the primary and the secondary mycelium. In the latter mycelium POH3 maight also play a role in the emergence of fruiting bodies. Secreted POH3 could also play a role in facilitating lignin degradation. In Pleurotus ostreatus (Oyster mushroom), this protein is Class I hydrophobin POH3.